We begin with the raw amino-acid sequence, 379 residues long: 4-hydroxy-3-methylbut-2-enyl diphosphate reductase (379 aa).

Cys39 is a binding site for [4Fe-4S] cluster. A (2E)-4-hydroxy-3-methylbut-2-enyl diphosphate-binding site is contributed by His69. Dimethylallyl diphosphate is bound at residue His69. Position 69 (His69) interacts with isopentenyl diphosphate. Cys130 is a [4Fe-4S] cluster binding site. His158 provides a ligand contact to (2E)-4-hydroxy-3-methylbut-2-enyl diphosphate. His158 serves as a coordination point for dimethylallyl diphosphate. His158 serves as a coordination point for isopentenyl diphosphate. The Proton donor role is filled by Glu160. Thr223 serves as a coordination point for (2E)-4-hydroxy-3-methylbut-2-enyl diphosphate. Cys261 contacts [4Fe-4S] cluster. (2E)-4-hydroxy-3-methylbut-2-enyl diphosphate contacts are provided by Ser290, Ser291, Asn292, and Ser352. Dimethylallyl diphosphate contacts are provided by Ser290, Ser291, Asn292, and Ser352. Isopentenyl diphosphate-binding residues include Ser290, Ser291, Asn292, and Ser352.

The protein belongs to the IspH family. [4Fe-4S] cluster is required as a cofactor.

It carries out the reaction isopentenyl diphosphate + 2 oxidized [2Fe-2S]-[ferredoxin] + H2O = (2E)-4-hydroxy-3-methylbut-2-enyl diphosphate + 2 reduced [2Fe-2S]-[ferredoxin] + 2 H(+). The catalysed reaction is dimethylallyl diphosphate + 2 oxidized [2Fe-2S]-[ferredoxin] + H2O = (2E)-4-hydroxy-3-methylbut-2-enyl diphosphate + 2 reduced [2Fe-2S]-[ferredoxin] + 2 H(+). Its pathway is isoprenoid biosynthesis; dimethylallyl diphosphate biosynthesis; dimethylallyl diphosphate from (2E)-4-hydroxy-3-methylbutenyl diphosphate: step 1/1. The protein operates within isoprenoid biosynthesis; isopentenyl diphosphate biosynthesis via DXP pathway; isopentenyl diphosphate from 1-deoxy-D-xylulose 5-phosphate: step 6/6. Catalyzes the conversion of 1-hydroxy-2-methyl-2-(E)-butenyl 4-diphosphate (HMBPP) into a mixture of isopentenyl diphosphate (IPP) and dimethylallyl diphosphate (DMAPP). Acts in the terminal step of the DOXP/MEP pathway for isoprenoid precursor biosynthesis. The polypeptide is 4-hydroxy-3-methylbut-2-enyl diphosphate reductase (Synechocystis sp. (strain ATCC 27184 / PCC 6803 / Kazusa)).